The primary structure comprises 557 residues: MNIAEQVKDALKEEIIAAVVKAGLADESQVPDVLLEVPKDKTHGDYSTNMAMQLARIAKKAPRQIAEDIVKAFDKGKASIEKMDIAGPGFINFYMNNQYLTKLIPAVLEAKEAYGETNTGGGQKVQVEFVSANPTGDLHLGHARGAAVGDSLCNILDKAGFDVSREYYINDAGNQINNLALSVEVRYFEALGLEKEMPEDGYRGEDIKGIGQKLADEFGDRFVHESEEERMKFFREYGLKYELEKLRVDLENFRVPFDVWYSETSLYENGKIEPALETLREKGYVFEEDGATWLRSTDFGDDKDRVLIKKDGSFTYLLPDIAYHKDKLDRGFDQLINIWGADHHGYIPRMKAAIQALGYPAGKLEVEIIQLVHLYKNGEKMKMSKRTGKAVTMRDLIEEVGLDATRYFFAMRSAATHMDFDLDLAISTSNENPVYYAQYAHARICSMLRQGEEKGYEPNLEKADFSHIQSEKEYDLLKIIGGFPEVVAEAAEKRIPHRVTNYIYDLASALHSFYNAEKVIDVENETKTTARLSLMKATQITLANALKLIGVSAPEKM.

The 'HIGH' region signature appears at 132–142; sequence ANPTGDLHLGH.

The protein belongs to the class-I aminoacyl-tRNA synthetase family. As to quaternary structure, monomer.

It localises to the cytoplasm. The catalysed reaction is tRNA(Arg) + L-arginine + ATP = L-arginyl-tRNA(Arg) + AMP + diphosphate. This is Arginine--tRNA ligase from Bacillus pumilus (strain SAFR-032).